Consider the following 82-residue polypeptide: RNA-binding protein KhpA (82 aa).

The KH domain maps to 35-82; that stretch reads STILELRVSQSDVGKIIGRRGRIARAIRTLLGACAAKTNRRVQLEILD.

The protein belongs to the KhpA RNA-binding protein family. Forms a complex with KhpB.

The protein localises to the cytoplasm. Its function is as follows. A probable RNA chaperone. Forms a complex with KhpB which binds to cellular RNA and controls its expression. Plays a role in peptidoglycan (PG) homeostasis and cell length regulation. The chain is RNA-binding protein KhpA from Borreliella burgdorferi (strain ATCC 35210 / DSM 4680 / CIP 102532 / B31) (Borrelia burgdorferi).